A 1052-amino-acid polypeptide reads, in one-letter code: Ubiquitin-like modifier-activating enzyme 6 (1052 aa).

The residue at position 1 (Met-1) is an N-acetylmethionine. A disordered region spans residues 1 to 21 (MEGSEPVAAHQGEEASCSSWG). Arg-46 contributes to the ATP binding site. Position 54 is a phosphothreonine (Thr-54). Ser-301 bears the Phosphoserine mark. Positions 470 and 497 each coordinate ATP. 2 residues coordinate Mg(2+): Asp-499 and Glu-502. 4 residues coordinate ATP: Asn-505, Arg-508, Gln-509, and Lys-521. Position 544 is an N6-acetyllysine (Lys-544). ATP is bound at residue Val-545. Position 569 (Asp-569) interacts with Mg(2+). Residue Asn-570 coordinates ATP. Cys-625 serves as the catalytic Glycyl thioester intermediate. The residue at position 729 (Lys-729) is an N6-acetyllysine. Phosphoserine is present on Ser-737.

This sequence belongs to the ubiquitin-activating E1 family. Forms a thioester with UBD in cells stimulated with tumor necrosis factor-alpha (TNFa) and interferon-gamma (IFNg). Widely expressed. Isoform 2 is predominantly expressed in testis with higher expression in adult testis than in fetal testis.

The enzyme catalyses ATP + ubiquitin + [E1 ubiquitin-activating enzyme]-L-cysteine = AMP + diphosphate + S-ubiquitinyl-[E1 ubiquitin-activating enzyme]-L-cysteine.. The protein operates within protein modification; protein ubiquitination. Functionally, activates ubiquitin by first adenylating its C-terminal glycine residue with ATP, and thereafter linking this residue to the side chain of a cysteine residue in E1, yielding a ubiquitin-E1 thioester and free AMP. Specific for ubiquitin, does not activate ubiquitin-like peptides. Also activates UBD/FAT10 conjugation via adenylation of its C-terminal glycine. Differs from UBE1 in its specificity for substrate E2 charging. Does not charge cell cycle E2s, such as CDC34. Essential for embryonic development. Isoform 2 may play a key role in ubiquitin system and may influence spermatogenesis and male fertility. In Homo sapiens (Human), this protein is Ubiquitin-like modifier-activating enzyme 6 (UBA6).